The sequence spans 302 residues: AP-1 complex-associated regulatory protein (302 aa).

The residue at position 29 (Ser29) is a Phosphoserine. Residues Asp78–His138 are interaction with AP1G1. A coiled-coil region spans residues Ile80–His138. Over residues Cys188 to Leu206 the composition is skewed to polar residues. The interval Cys188–Leu258 is disordered. The tract at residues Gly199 to Gly215 is sufficient for association with the Arp2/3 complex. Residues Pro221–Leu233 are compositionally biased toward basic and acidic residues. Position 226 is a phosphoserine (Ser226). Position 228 is a phosphothreonine (Thr228). The segment covering Lys242–Ser255 has biased composition (polar residues).

Interacts (via coiled-coil domain) with AP1G1 (via GAE domain). Interacts with KIF5B. Associates with the Arp2/3 complex. In terms of processing, palmitoylated.

Its subcellular location is the golgi apparatus. It localises to the trans-Golgi network. It is found in the late endosome. The protein localises to the early endosome. Necessary for adaptor protein complex 1 (AP-1)-dependent transport between the trans-Golgi network and endosomes. Regulates the membrane association of AP1G1/gamma1-adaptin, one of the subunits of the AP-1 adaptor complex. The direct interaction with AP1G1/gamma1-adaptin attenuates the release of the AP-1 complex from membranes. Regulates endosomal membrane traffic via association with AP-1 and KIF5B thus linking kinesin-based plus-end-directed microtubular transport to AP-1-dependent membrane traffic. May act as effector of AP-1 in calcium-induced endo-lysosome secretion. Inhibits Arp2/3 complex function; negatively regulates cell spreading, size and motility via intracellular sequestration of the Arp2/3 complex. This is AP-1 complex-associated regulatory protein (AP1AR) from Homo sapiens (Human).